Consider the following 224-residue polypeptide: Urease accessory protein UreF (224 aa).

The protein belongs to the UreF family. UreD, UreF and UreG form a complex that acts as a GTP-hydrolysis-dependent molecular chaperone, activating the urease apoprotein by helping to assemble the nickel containing metallocenter of UreC. The UreE protein probably delivers the nickel.

Its subcellular location is the cytoplasm. Required for maturation of urease via the functional incorporation of the urease nickel metallocenter. The sequence is that of Urease accessory protein UreF from Pseudomonas fluorescens (strain SBW25).